The following is a 240-amino-acid chain: UDP-2,3-diacylglucosamine hydrolase (240 aa).

Residues aspartate 7, histidine 9, aspartate 40, asparagine 78, and histidine 113 each contribute to the Mn(2+) site. A substrate-binding site is contributed by 78–79; the sequence is NR. Substrate is bound by residues aspartate 121, serine 159, lysine 166, and histidine 194. 2 residues coordinate Mn(2+): histidine 194 and histidine 196.

The protein belongs to the LpxH family. Requires Mn(2+) as cofactor.

It is found in the cell inner membrane. It carries out the reaction UDP-2-N,3-O-bis[(3R)-3-hydroxytetradecanoyl]-alpha-D-glucosamine + H2O = 2-N,3-O-bis[(3R)-3-hydroxytetradecanoyl]-alpha-D-glucosaminyl 1-phosphate + UMP + 2 H(+). Its pathway is glycolipid biosynthesis; lipid IV(A) biosynthesis; lipid IV(A) from (3R)-3-hydroxytetradecanoyl-[acyl-carrier-protein] and UDP-N-acetyl-alpha-D-glucosamine: step 4/6. Hydrolyzes the pyrophosphate bond of UDP-2,3-diacylglucosamine to yield 2,3-diacylglucosamine 1-phosphate (lipid X) and UMP by catalyzing the attack of water at the alpha-P atom. Involved in the biosynthesis of lipid A, a phosphorylated glycolipid that anchors the lipopolysaccharide to the outer membrane of the cell. In Pseudomonas putida (strain ATCC 700007 / DSM 6899 / JCM 31910 / BCRC 17059 / LMG 24140 / F1), this protein is UDP-2,3-diacylglucosamine hydrolase.